The primary structure comprises 308 residues: Methionine synthase (308 aa).

Residues His-201, Cys-203, Glu-224, and Cys-285 each contribute to the Zn(2+) site.

This sequence belongs to the archaeal MetE family. Zn(2+) is required as a cofactor.

It functions in the pathway amino-acid biosynthesis; L-methionine biosynthesis via de novo pathway. Functionally, catalyzes the transfer of a methyl group to L-homocysteine resulting in methionine formation. Can use methylcobalamin and methylcobinamide as methyl donors, but methylcobalamin is not considered to be the physiological substrate. This Methanothermobacter thermautotrophicus (strain ATCC 29096 / DSM 1053 / JCM 10044 / NBRC 100330 / Delta H) (Methanobacterium thermoautotrophicum) protein is Methionine synthase.